The following is a 418-amino-acid chain: Gamma-glutamyl phosphate reductase (418 aa).

It belongs to the gamma-glutamyl phosphate reductase family.

The protein localises to the cytoplasm. The enzyme catalyses L-glutamate 5-semialdehyde + phosphate + NADP(+) = L-glutamyl 5-phosphate + NADPH + H(+). Its pathway is amino-acid biosynthesis; L-proline biosynthesis; L-glutamate 5-semialdehyde from L-glutamate: step 2/2. Functionally, catalyzes the NADPH-dependent reduction of L-glutamate 5-phosphate into L-glutamate 5-semialdehyde and phosphate. The product spontaneously undergoes cyclization to form 1-pyrroline-5-carboxylate. This Colwellia psychrerythraea (strain 34H / ATCC BAA-681) (Vibrio psychroerythus) protein is Gamma-glutamyl phosphate reductase.